A 162-amino-acid chain; its full sequence is MAAVEAAKTPRFILLIIEWVFALVAFAVMGHYLFDDRRSSFEYLTAICILVWLVVMIYMVILCCGRALPPLIEAAIFLLFAILVFIAFLVTAVKCNNSETIVIAGQTISRKVCEGESEPKAAAAFAFLLGLLLAGSSVLGCIAFRRPSAPPLSSFQNPTSSV.

Topologically, residues 1–11 (MAAVEAAKTPR) are cytoplasmic. Residues 12 to 32 (FILLIIEWVFALVAFAVMGHY) traverse the membrane as a helical segment. Residues 33–43 (LFDDRRSSFEY) are Extracellular-facing. The chain crosses the membrane as a helical span at residues 44 to 64 (LTAICILVWLVVMIYMVILCC). The Cytoplasmic portion of the chain corresponds to 65–69 (GRALP). The chain crosses the membrane as a helical span at residues 70 to 90 (PLIEAAIFLLFAILVFIAFLV). Over 91–123 (TAVKCNNSETIVIAGQTISRKVCEGESEPKAAA) the chain is Extracellular. The N-linked (GlcNAc...) asparagine glycan is linked to asparagine 96. The helical transmembrane segment at 124–144 (AFAFLLGLLLAGSSVLGCIAF) threads the bilayer. At 145–162 (RRPSAPPLSSFQNPTSSV) the chain is on the cytoplasmic side.

This sequence belongs to the Casparian strip membrane proteins (CASP) family. Homodimer and heterodimers.

Its subcellular location is the cell membrane. The polypeptide is CASP-like protein 0U1 (Chlorokybus atmophyticus (Soil alga)).